The chain runs to 342 residues: N-acetyl-gamma-glutamyl-phosphate reductase (342 aa).

The active site involves Cys149.

This sequence belongs to the NAGSA dehydrogenase family. Type 1 subfamily.

The protein resides in the cytoplasm. The catalysed reaction is N-acetyl-L-glutamate 5-semialdehyde + phosphate + NADP(+) = N-acetyl-L-glutamyl 5-phosphate + NADPH + H(+). It functions in the pathway amino-acid biosynthesis; L-arginine biosynthesis; N(2)-acetyl-L-ornithine from L-glutamate: step 3/4. Its function is as follows. Catalyzes the NADPH-dependent reduction of N-acetyl-5-glutamyl phosphate to yield N-acetyl-L-glutamate 5-semialdehyde. This is N-acetyl-gamma-glutamyl-phosphate reductase from Cereibacter sphaeroides (strain ATCC 17023 / DSM 158 / JCM 6121 / CCUG 31486 / LMG 2827 / NBRC 12203 / NCIMB 8253 / ATH 2.4.1.) (Rhodobacter sphaeroides).